We begin with the raw amino-acid sequence, 122 residues long: Acidic phospholipase A2 BpirPLA2-I (122 aa).

7 disulfide bridges follow: C26/C115, C28/C44, C43/C95, C49/C122, C50/C88, C57/C81, and C75/C86. The Ca(2+) site is built by Y27, G29, and G31. Residue H47 is part of the active site. D48 contributes to the Ca(2+) binding site. Residue D89 is part of the active site. The short motif at 105–117 is the Antiplatelet activity element; sequence IKYWFYGAKNCQE.

This sequence belongs to the phospholipase A2 family. Group II subfamily. D49 sub-subfamily. The cofactor is Ca(2+). In terms of tissue distribution, expressed by the venom gland.

The protein resides in the secreted. The catalysed reaction is a 1,2-diacyl-sn-glycero-3-phosphocholine + H2O = a 1-acyl-sn-glycero-3-phosphocholine + a fatty acid + H(+). With respect to regulation, inhibited by EDTA and p-bromophenacyl bromide (BPB). Functionally, snake venom phospholipase A2 (PLA2) that inhibits collagen/ADP-induced platelet aggregation, and induces hypotension in rats (activity abolished in the presence of p-bromophenacyl bromide). PLA2 catalyzes the calcium-dependent hydrolysis of the 2-acyl groups in 3-sn-phosphoglycerides. This is Acidic phospholipase A2 BpirPLA2-I from Bothrops pirajai (Piraja's lancehead).